We begin with the raw amino-acid sequence, 141 residues long: Lutropin subunit beta (141 aa).

A signal peptide spans 1–20 (MEMLQGLLLWLLLSMGGARA). 6 disulfides stabilise this stretch: C29–C77, C43–C92, C46–C130, C54–C108, C58–C110, and C113–C120. 2 N-linked (GlcNAc...) asparagine glycosylation sites follow: N33 and N50.

The protein belongs to the glycoprotein hormones subunit beta family. Heterodimer of a common alpha chain and a unique beta chain which confers biological specificity to thyrotropin, lutropin, follitropin and gonadotropin.

It is found in the secreted. In terms of biological role, promotes spermatogenesis and ovulation by stimulating the testes and ovaries to synthesize steroids. This Macaca fascicularis (Crab-eating macaque) protein is Lutropin subunit beta (LHB).